A 124-amino-acid chain; its full sequence is Aspartate 1-decarboxylase (124 aa).

The Schiff-base intermediate with substrate; via pyruvic acid role is filled by Ser25. The residue at position 25 (Ser25) is a Pyruvic acid (Ser). Thr57 contacts substrate. Tyr58 acts as the Proton donor in catalysis. Gly71–Ala73 serves as a coordination point for substrate.

It belongs to the PanD family. In terms of assembly, heterooctamer of four alpha and four beta subunits. Pyruvate serves as cofactor. Is synthesized initially as an inactive proenzyme, which is activated by self-cleavage at a specific serine bond to produce a beta-subunit with a hydroxyl group at its C-terminus and an alpha-subunit with a pyruvoyl group at its N-terminus.

The protein localises to the cytoplasm. It catalyses the reaction L-aspartate + H(+) = beta-alanine + CO2. The protein operates within cofactor biosynthesis; (R)-pantothenate biosynthesis; beta-alanine from L-aspartate: step 1/1. Catalyzes the pyruvoyl-dependent decarboxylation of aspartate to produce beta-alanine. The protein is Aspartate 1-decarboxylase of Bdellovibrio bacteriovorus (strain ATCC 15356 / DSM 50701 / NCIMB 9529 / HD100).